We begin with the raw amino-acid sequence, 103 residues long: MEKIRLKLRAYDHRVLDRSVSAIVEAVKRTGAEIRGPIPLPTKIRRYTVLRSPHINKDSREQFEIRIHSRLIDIVSATPDTVDSLMKLDLAPEVDVEVRSMGE.

The protein belongs to the universal ribosomal protein uS10 family. In terms of assembly, part of the 30S ribosomal subunit.

Functionally, involved in the binding of tRNA to the ribosomes. In Nitratiruptor sp. (strain SB155-2), this protein is Small ribosomal subunit protein uS10.